A 351-amino-acid polypeptide reads, in one-letter code: Protein-glutamate methylesterase/protein-glutamine glutaminase 2 (351 aa).

Residues 4 to 121 form the Response regulatory domain; sequence KVLVVDDSAL…PQDFNEYQDL (118 aa). Asp-55 is subject to 4-aspartylphosphate. In terms of domain architecture, CheB-type methylesterase spans 156–348; that stretch reads RVINTQLVAI…DKMLNYLASL (193 aa). Active-site residues include Ser-168, His-194, and Asp-290.

The protein belongs to the CheB family. Post-translationally, phosphorylated by CheA. Phosphorylation of the N-terminal regulatory domain activates the methylesterase activity.

It localises to the cytoplasm. The catalysed reaction is [protein]-L-glutamate 5-O-methyl ester + H2O = L-glutamyl-[protein] + methanol + H(+). It carries out the reaction L-glutaminyl-[protein] + H2O = L-glutamyl-[protein] + NH4(+). Functionally, involved in chemotaxis. Part of a chemotaxis signal transduction system that modulates chemotaxis in response to various stimuli. Catalyzes the demethylation of specific methylglutamate residues introduced into the chemoreceptors (methyl-accepting chemotaxis proteins or MCP) by CheR. Also mediates the irreversible deamidation of specific glutamine residues to glutamic acid. This chain is Protein-glutamate methylesterase/protein-glutamine glutaminase 2, found in Shewanella sp. (strain MR-4).